The primary structure comprises 484 residues: uncharacterized protein (484 aa).

Residues 25 to 45 (PLSLFVVLAAVPLPIYFSGLL) traverse the membrane as a helical segment. The region spanning 384–419 (LSFEETKELWVRADLDGNGVFDYEELKKIWNMTMVN) is the EF-hand domain. Ca(2+)-binding residues include aspartate 397, aspartate 399, asparagine 401, and glutamate 408.

The protein localises to the membrane. This is an uncharacterized protein from Arabidopsis thaliana (Mouse-ear cress).